Reading from the N-terminus, the 384-residue chain is Flap endonuclease 1 (384 aa).

Positions Met-1 to Arg-105 are N-domain. Asp-34 is a Mg(2+) binding site. A DNA-binding site is contributed by Arg-71. Mg(2+) contacts are provided by Asp-87, Glu-159, Glu-161, Asp-180, and Asp-182. The tract at residues Glu-123 to Tyr-254 is I-domain. Glu-159 serves as a coordination point for DNA. DNA contacts are provided by Gly-232 and Asp-234. Asp-234 is a binding site for Mg(2+). Positions Gly-337–Phe-345 are interaction with PCNA. The disordered stretch occupies residues Ser-353–Phe-384. A compositionally biased stretch (basic residues) spans Lys-374–Phe-384.

The protein belongs to the XPG/RAD2 endonuclease family. FEN1 subfamily. Interacts with PCNA. Three molecules of FEN1 bind to one PCNA trimer with each molecule binding to one PCNA monomer. PCNA stimulates the nuclease activity without altering cleavage specificity. The cofactor is Mg(2+). Phosphorylated. Phosphorylation upon DNA damage induces relocalization to the nuclear plasma.

The protein resides in the nucleus. The protein localises to the nucleolus. Its subcellular location is the nucleoplasm. It is found in the mitochondrion. Structure-specific nuclease with 5'-flap endonuclease and 5'-3' exonuclease activities involved in DNA replication and repair. During DNA replication, cleaves the 5'-overhanging flap structure that is generated by displacement synthesis when DNA polymerase encounters the 5'-end of a downstream Okazaki fragment. It enters the flap from the 5'-end and then tracks to cleave the flap base, leaving a nick for ligation. Also involved in the long patch base excision repair (LP-BER) pathway, by cleaving within the apurinic/apyrimidinic (AP) site-terminated flap. Acts as a genome stabilization factor that prevents flaps from equilibrating into structures that lead to duplications and deletions. Also possesses 5'-3' exonuclease activity on nicked or gapped double-stranded DNA, and exhibits RNase H activity. Also involved in replication and repair of rDNA and in repairing mitochondrial DNA. The polypeptide is Flap endonuclease 1 (Micromonas commoda (strain RCC299 / NOUM17 / CCMP2709) (Picoplanktonic green alga)).